The following is a 162-amino-acid chain: Translocator protein 2 (162 aa).

The next 5 helical transmembrane spans lie at 3–23 (LQGP…CMLI), 44–64 (VILL…YLVW), 79–99 (LGLY…FLAA), 103–123 (GLAL…VFIW), and 129–149 (LAAL…AITY).

The protein belongs to the TspO/BZRP family. As to quaternary structure, homotetramer. May also form homodimer. Expressed in liver, bone marrow and spleen. In spleen, detected in red pulp but not in white pulp.

It localises to the endoplasmic reticulum membrane. It is found in the cell membrane. Cholesterol-binding protein involved in the redistribution of cholesterol from lipid droplets to the endoplasmic reticulum. Required to meet cholesterol demands during erythropoietic differentiation. May play a role in transport processes at the plasma membrane of erythrocytes, including regulating VDAC-mediated ATP export, and import of the heme precursors protoporphyrin IX and 5-aminolevulinic acid. This is Translocator protein 2 (Tspo2) from Mus musculus (Mouse).